Here is a 467-residue protein sequence, read N- to C-terminus: Glutamate--tRNA ligase (467 aa).

A 'HIGH' region motif is present at residues proline 9–glycine 19. Positions lysine 250–arginine 254 match the 'KMSKS' region motif. Residue lysine 253 coordinates ATP.

This sequence belongs to the class-I aminoacyl-tRNA synthetase family. Glutamate--tRNA ligase type 1 subfamily. In terms of assembly, monomer.

The protein resides in the cytoplasm. It catalyses the reaction tRNA(Glu) + L-glutamate + ATP = L-glutamyl-tRNA(Glu) + AMP + diphosphate. Its function is as follows. Catalyzes the attachment of glutamate to tRNA(Glu) in a two-step reaction: glutamate is first activated by ATP to form Glu-AMP and then transferred to the acceptor end of tRNA(Glu). The chain is Glutamate--tRNA ligase from Mesomycoplasma hyopneumoniae (strain 7448) (Mycoplasma hyopneumoniae).